We begin with the raw amino-acid sequence, 251 residues long: Triosephosphate isomerase (251 aa).

9–11 (NWK) contacts substrate. The active-site Electrophile is the H95. E167 functions as the Proton acceptor in the catalytic mechanism. Residues G173, S212, and 233–234 (GG) contribute to the substrate site.

This sequence belongs to the triosephosphate isomerase family. As to quaternary structure, homodimer.

It is found in the cytoplasm. The enzyme catalyses D-glyceraldehyde 3-phosphate = dihydroxyacetone phosphate. Its pathway is carbohydrate biosynthesis; gluconeogenesis. It functions in the pathway carbohydrate degradation; glycolysis; D-glyceraldehyde 3-phosphate from glycerone phosphate: step 1/1. In terms of biological role, involved in the gluconeogenesis. Catalyzes stereospecifically the conversion of dihydroxyacetone phosphate (DHAP) to D-glyceraldehyde-3-phosphate (G3P). The chain is Triosephosphate isomerase from Pseudomonas syringae pv. tomato (strain ATCC BAA-871 / DC3000).